Reading from the N-terminus, the 849-residue chain is ATP-binding cassette sub-family B member 6 (849 aa).

Over 1–25 (MVRLGSYCEHNGSISQAWLDSGLSP) the chain is Lumenal. The required for the lysosomal targeting stretch occupies residues 1–195 (MVRLGSYCEH…TLFLFVLGIR (195 aa)). A required for ATPase activity region spans residues 1–227 (MVRLGSYCEH…SQPLLRDPNQ (227 aa)). A disulfide bond links C8 and C26. Residue N11 is glycosylated (N-linked (GlcNAc...) asparagine). The chain crosses the membrane as a helical span at residues 26-46 (CFYFTLVPSVLLSFSFLLGAL). The Cytoplasmic segment spans residues 47–72 (QSALYARHSTTMEPKYIPRSRLYRLQ). The helical transmembrane segment at 73-93 (IVLSVVLILQSVIGLIWQAAG) threads the bilayer. Residues 94–98 (TDVVY) lie on the Lumenal side of the membrane. Residues 99 to 119 (GYMIVHGCLSVVAWGFSLWLL) traverse the membrane as a helical segment. At 120 to 136 (HLERTRALVREKSRGHG) the chain is on the cytoplasmic side. The helical transmembrane segment at 137–157 (VVLLLFWALAFAAENLAFISW) threads the bilayer. At 158 to 173 (QSPNWWWLSRDTVPQK) the chain is on the lumenal side. The chain crosses the membrane as a helical span at residues 174-194 (VQFGLWITRYVCTLFLFVLGI). At 195-254 (RAPGRPRKPYIVLINEDERDVETSQPLLRDPNQSTWQGFKKKLLLVMQYIWPRRNIPLQL) the chain is on the cytoplasmic side. A helical membrane pass occupies residues 255-275 (LVALCMGLMGLERAINVFVPI). The 292-residue stretch at 256–547 (VALCMGLMGL…FGTYYRMIQS (292 aa)) folds into the ABC transmembrane type-1 domain. At 276–291 (YAKKIVDGLTEDSTWN) the chain is on the lumenal side. Residues 292–312 (ILAVTVCIYVLLKFLQGGGAG) traverse the membrane as a helical segment. Topologically, residues 313–373 (TTGFLSNLRT…VDRGTSSINS (61 aa)) are cytoplasmic. The chain crosses the membrane as a helical span at residues 374-394 (LLSYIVFSILPTIADIVIGIV). The Lumenal portion of the chain corresponds to 395 to 401 (YFTSSFN). Residues 402-422 (AWFGLIIFVCMTLYLTLTIII) form a helical membrane-spanning segment. Over 423–492 (TEWRTKYRRE…ASLAMLNQTQ (70 aa)) the chain is Cytoplasmic. A helical transmembrane segment spans residues 493-513 (NLIIGLGLLAGSLLCAYFVTE). The Lumenal portion of the chain corresponds to 514-520 (NKFKVGD). A helical membrane pass occupies residues 521–541 (YVLFGTYIIQLYTPLNWFGTY). The Cytoplasmic portion of the chain corresponds to 542-849 (YRMIQSSFID…PPKATPRRGH (308 aa)). The ABC transporter domain maps to 581–815 (IEFENVHFSY…GGVYAGMWQK (235 aa)). Residues Y590 and 614–625 (GPSGSGKSTIIR) contribute to the ATP site. Residues 814 to 825 (QKQQSGSESSSD) show a composition bias toward low complexity. The disordered stretch occupies residues 814 to 849 (QKQQSGSESSSDSDSERKDRTSEKLQPPKATPRRGH). The segment covering 827-836 (DSERKDRTSE) has biased composition (basic and acidic residues).

Belongs to the ABC transporter superfamily. ABCB family. Heavy Metal importer (TC 3.A.1.210) subfamily. Homodimer. In terms of processing, N-glycosylated.

The protein resides in the cell membrane. The protein localises to the mitochondrion outer membrane. It localises to the endoplasmic reticulum membrane. Its subcellular location is the golgi apparatus membrane. It is found in the endosome membrane. The protein resides in the lysosome membrane. The protein localises to the late endosome membrane. It localises to the early endosome membrane. Its subcellular location is the secreted. It is found in the extracellular exosome. The protein resides in the mitochondrion. The protein localises to the endosome. It localises to the multivesicular body membrane. Its subcellular location is the melanosome membrane. It carries out the reaction heme b(in) + ATP + H2O = heme b(out) + ADP + phosphate + H(+). It catalyses the reaction coproporphyrin III(in) + ATP + H2O = coproporphyrin III(out) + ADP + phosphate + H(+). The enzyme catalyses pheophorbide a(in) + ATP + H2O = pheophorbide a(out) + ADP + phosphate + H(+). The catalysed reaction is coproporphyrinogen III(in) + ATP + H2O = coproporphyrinogen III(out) + ADP + phosphate + H(+). It carries out the reaction protoporphyrin IX(in) + ATP + H2O = protoporphyrin IX(out) + ADP + phosphate + H(+). It catalyses the reaction coproporphyrin I(in) + ATP + H2O = coproporphyrin I(out) + ADP + phosphate + H(+). The enzyme catalyses uroporphyrin I(in) + ATP + H2O = uroporphyrin I(out) + ADP + phosphate + H(+). The catalysed reaction is uroporphyrin III(in) + ATP + H2O = uroporphyrin III(out) + ADP + phosphate + H(+). Functionally, ATP-dependent transporter that catalyzes the transport of a broad-spectrum of porphyrins from the cytoplasm to the extracellular space through the plasma membrane or into the vesicle lumen. May also function as an ATP-dependent importer of porphyrins from the cytoplasm into the mitochondria, in turn may participate in the de novo heme biosynthesis regulation and in the coordination of heme and iron homeostasis during phenylhydrazine stress. May also play a key role in the early steps of melanogenesis producing PMEL amyloid fibrils. In vitro, it confers to cells a resistance to toxic metal such as arsenic and cadmium and against chemotherapeutics agent such as 5-fluorouracil, SN-38 and vincristin. In addition may play a role in the transition metal homeostasis. This is ATP-binding cassette sub-family B member 6 (abcb6) from Xenopus tropicalis (Western clawed frog).